We begin with the raw amino-acid sequence, 318 residues long: D-alanine--D-alanine ligase (318 aa).

The ATP-grasp domain occupies 116–311; sequence KQVWQSLGIP…FQQLVLAILA (196 aa). An ATP-binding site is contributed by 142–197; that stretch reads SAELGFPLIVKPAHEGSSIGMAKVNSEQELVAAWKDAAKYDSQVLVEQWIHGPEFT. The Mg(2+) site is built by D265, E278, and N280.

The protein belongs to the D-alanine--D-alanine ligase family. Mg(2+) serves as cofactor. Requires Mn(2+) as cofactor.

Its subcellular location is the cytoplasm. It catalyses the reaction 2 D-alanine + ATP = D-alanyl-D-alanine + ADP + phosphate + H(+). The protein operates within cell wall biogenesis; peptidoglycan biosynthesis. Cell wall formation. The polypeptide is D-alanine--D-alanine ligase (Pseudomonas entomophila (strain L48)).